The primary structure comprises 431 residues: UPF0597 protein TDE_2144 (431 aa).

The protein belongs to the UPF0597 family.

This chain is UPF0597 protein TDE_2144, found in Treponema denticola (strain ATCC 35405 / DSM 14222 / CIP 103919 / JCM 8153 / KCTC 15104).